The chain runs to 219 residues: Bacterial microcompartment shell protein EutL (219 aa).

BMC circularly permuted domains follow at residues Met1–Phe113 and Gln114–Pro215. Residues Asp45, Asp46, Glu83, and Phe113 each coordinate ethanolamine. Positions Asp45–Asp46 are part of the acidic patch lining the small pore. Glu157 contacts Zn(2+). Position 183-185 (Thr183–Tyr185) interacts with ethanolamine.

The protein belongs to the EutL/PduB family. As to quaternary structure, homotrimerizes to form a pseudohexamer. The trimers form a two-dimensional array about 37 Angstroms thick.

The protein resides in the bacterial microcompartment. Its pathway is amine and polyamine degradation; ethanolamine degradation. In terms of biological role, a component of the bacterial microcompartment (BMC) shell dedicated to ethanolamine degradation. Two crystal forms have been seen; a form with a closed central pore that has 3 very small (1.1-2.2 Angstroms) channels per trimer lined by acidic and aromatic residues. A form with a large central pore (8-12 Angstroms) has also been seen; this is probably a functional pore which allows molecules to enter and exit the BMC in a selective, gated manner. Another group only sees the central pore in the presence of Zn(2+); soaking crystals in ZnCl(2) leads to dramatic conformational changes that open a central pore of about 12 Angstroms. Whether Zn(2+) binding is physiologically relevant is unclear, however it suggests a gating mechanism exists. Ethanolamine-binding by the small channels has been hypothesized to stabilize the EutL central pore in a closed (non-transporting) state. An open pore is thought to be large enough to transport ATP and/or cobalamin. The sequence is that of Bacterial microcompartment shell protein EutL (eutL) from Escherichia coli (strain K12).